Reading from the N-terminus, the 129-residue chain is M-zodatoxin-Lt8a (129 aa).

The signal sequence occupies residues 1–20 (MKYFVVALALVAAFACIAES). Residues 21 to 60 (KPAESEHELAEVEEENELADLEDAVWLEHLADLSDLEEAR) constitute a propeptide that is removed on maturation. Positions 57 to 60 (EEAR) match the Processing quadruplet motif motif.

It belongs to the cationic peptide 06 (cytoinsectotoxin) family. In terms of processing, cleavage of the propeptide depends on the processing quadruplet motif (XXXR, with at least one of X being E). Expressed by the venom gland.

Its subcellular location is the secreted. Functionally, insecticidal, cytolytic and antimicrobial peptide. Has insecticidal activity against the flesh fly S.carnaria, and against the cockroach N.cinerea. Has insecticidal activity against D.melanogaster. Has hemolytic activity against human erythrocytes (EC(50)=6 uM). Has cytolytic activity against insect Sf9 cells (EC(50)=1 uM) and human leukocytes (EC(50)=3 uM). Has antibacterial activity against the Gram-positive bacteria A.globiformis VKM Ac-1112 (MIC=0.5 uM), and B.subtilis VKM B-501 (MIC=0.6-0.9 uM), and against the Gram-negative bacteria E.coli C600 (MIC=0.5 uM), E.coli DH5alpha (MIC=0.9 uM), E.coli MH1 (MIC=0.5 uM), P.aeruginosa PAO1 (MIC=1.9 uM), and P.fluorescens VKM B-894 (MIC=3.8 uM). Lacks antimicrobial activity against the Gram-positive bacteria M.luteus and S.aureus, and against the Gram-negative bacterium S.marcescens. Forms voltage-dependent, ion-permeable channels in membranes. At high concentration causes cell membrane lysis. The protein is M-zodatoxin-Lt8a (cit 1-1) of Lachesana tarabaevi (Spider).